An 86-amino-acid polypeptide reads, in one-letter code: Putative membrane protein insertion efficiency factor (86 aa).

The protein belongs to the UPF0161 family.

The protein resides in the cell inner membrane. In terms of biological role, could be involved in insertion of integral membrane proteins into the membrane. The protein is Putative membrane protein insertion efficiency factor of Oleidesulfovibrio alaskensis (strain ATCC BAA-1058 / DSM 17464 / G20) (Desulfovibrio alaskensis).